Here is a 245-residue protein sequence, read N- to C-terminus: Photosystem II protein PSBS2 (245 aa).

Residues 1-25 (MAMTLSTKAFAQRGVSARKNTVRVY) constitute a chloroplast transit peptide. 4 helical membrane-spanning segments follow: residues 72–92 (LFVG…EILT), 108–128 (GIEV…AAVL), 185–205 (LGFA…LAQF), and 217–237 (EFGL…EGSG).

This sequence belongs to the ELIP/psbS family.

Its subcellular location is the plastid. It localises to the chloroplast thylakoid membrane. In terms of biological role, required for non-photochemical quenching (NPQ), a mechanism that converts and dissipates the harmful excess absorbed light energy into heat and protect the photosynthetic apparatus from photo-oxidative damage. Seems involved in the activation of NPQ, possibly by promoting conformational changes required for activation of LHCSR3-dependent quenching in the antenna of photosystem II (PSII). The polypeptide is Photosystem II protein PSBS2 (Chlamydomonas reinhardtii (Chlamydomonas smithii)).